The chain runs to 224 residues: UPF0111 protein CPn_0681/CP_0066/CPj0681/CpB0708 (224 aa).

The protein belongs to the UPF0111 family.

In Chlamydia pneumoniae (Chlamydophila pneumoniae), this protein is UPF0111 protein CPn_0681/CP_0066/CPj0681/CpB0708.